The chain runs to 202 residues: Small ribosomal subunit protein uS4c (202 aa).

Positions 90–151 constitute an S4 RNA-binding domain; the sequence is MRLDNTIFRL…KQKSRFIITK (62 aa).

Belongs to the universal ribosomal protein uS4 family. Part of the 30S ribosomal subunit. Contacts protein S5. The interaction surface between S4 and S5 is involved in control of translational fidelity.

The protein localises to the plastid. It is found in the chloroplast. In terms of biological role, one of the primary rRNA binding proteins, it binds directly to 16S rRNA where it nucleates assembly of the body of the 30S subunit. Functionally, with S5 and S12 plays an important role in translational accuracy. The chain is Small ribosomal subunit protein uS4c (rps4) from Plagiochila adianthoides (Liverwort).